A 152-amino-acid chain; its full sequence is Deoxyuridine 5'-triphosphate nucleotidohydrolase (152 aa).

Substrate-binding positions include 72-74, asparagine 85, and 89-91; these read RSG and TID.

Belongs to the dUTPase family. It depends on Mg(2+) as a cofactor.

It carries out the reaction dUTP + H2O = dUMP + diphosphate + H(+). Its pathway is pyrimidine metabolism; dUMP biosynthesis; dUMP from dCTP (dUTP route): step 2/2. In terms of biological role, this enzyme is involved in nucleotide metabolism: it produces dUMP, the immediate precursor of thymidine nucleotides and it decreases the intracellular concentration of dUTP so that uracil cannot be incorporated into DNA. This is Deoxyuridine 5'-triphosphate nucleotidohydrolase from Rhodopseudomonas palustris (strain BisB5).